The sequence spans 429 residues: UDP-N-acetylglucosamine 1-carboxyvinyltransferase (429 aa).

Residue 22–23 (KN) participates in phosphoenolpyruvate binding. Arg-102 is a binding site for UDP-N-acetyl-alpha-D-glucosamine. Cys-126 (proton donor) is an active-site residue. At Cys-126 the chain carries 2-(S-cysteinyl)pyruvic acid O-phosphothioketal. Residues 131 to 135 (RPVDL), Asp-316, and Ile-338 contribute to the UDP-N-acetyl-alpha-D-glucosamine site.

Belongs to the EPSP synthase family. MurA subfamily.

Its subcellular location is the cytoplasm. The catalysed reaction is phosphoenolpyruvate + UDP-N-acetyl-alpha-D-glucosamine = UDP-N-acetyl-3-O-(1-carboxyvinyl)-alpha-D-glucosamine + phosphate. It participates in cell wall biogenesis; peptidoglycan biosynthesis. Functionally, cell wall formation. Adds enolpyruvyl to UDP-N-acetylglucosamine. This chain is UDP-N-acetylglucosamine 1-carboxyvinyltransferase, found in Methylorubrum populi (strain ATCC BAA-705 / NCIMB 13946 / BJ001) (Methylobacterium populi).